Here is a 163-residue protein sequence, read N- to C-terminus: DNA endonuclease I-CreI (163 aa).

Residues Gly19 and Asp20 each contribute to the Mg(2+) site. 4 interaction with DNA regions span residues 26 to 38, 44 to 47, 68 to 70, and 138 to 143; these read QIKP…FKHQ, QVTQ, RDR, and SKTRKT.

The protein belongs to the LAGLIDADG endonuclease family. Homodimer. Mg(2+) serves as cofactor. The cofactor is Mn(2+). Requires Co(2+) as cofactor. It depends on Ni(2+) as a cofactor. Zn(2+) is required as a cofactor.

The protein localises to the plastid. Its subcellular location is the chloroplast. In terms of biological role, endonuclease involved in group I intron homing. Recognizes and cleaves a 19-24 bp palindromic DNA site. The polypeptide is DNA endonuclease I-CreI (Chlamydomonas reinhardtii (Chlamydomonas smithii)).